The chain runs to 104 residues: Small ribosomal subunit protein uS10 (104 aa).

Belongs to the universal ribosomal protein uS10 family. As to quaternary structure, part of the 30S ribosomal subunit.

Its function is as follows. Involved in the binding of tRNA to the ribosomes. This Alkaliphilus metalliredigens (strain QYMF) protein is Small ribosomal subunit protein uS10.